A 153-amino-acid polypeptide reads, in one-letter code: FAD synthase (153 aa).

ATP is bound by residues 9-10, 14-17, asparagine 92, and tyrosine 119; these read TF and HPGH.

It belongs to the archaeal FAD synthase family. Homodimer. Requires a divalent metal cation as cofactor.

It catalyses the reaction FMN + ATP + H(+) = FAD + diphosphate. It participates in cofactor biosynthesis; FAD biosynthesis; FAD from FMN: step 1/1. Catalyzes the transfer of the AMP portion of ATP to flavin mononucleotide (FMN) to produce flavin adenine dinucleotide (FAD) coenzyme. This Methanosphaerula palustris (strain ATCC BAA-1556 / DSM 19958 / E1-9c) protein is FAD synthase.